A 92-amino-acid polypeptide reads, in one-letter code: Small ribosomal subunit protein uS19 (92 aa).

Belongs to the universal ribosomal protein uS19 family.

Functionally, protein S19 forms a complex with S13 that binds strongly to the 16S ribosomal RNA. This Chromobacterium violaceum (strain ATCC 12472 / DSM 30191 / JCM 1249 / CCUG 213 / NBRC 12614 / NCIMB 9131 / NCTC 9757 / MK) protein is Small ribosomal subunit protein uS19.